A 2594-amino-acid chain; its full sequence is Immunoglobulin superfamily member 10 (2594 aa).

An N-terminal signal peptide occupies residues 1 to 25 (MQKRGREVSCLLISLTAICLVVTPG). Residues 29 to 56 (CPRRCACYVPTEVHCTFRYLTSIPDGIP) form the LRRNT domain. LRR repeat units lie at residues 58–79 (NVER…DFSG), 82–103 (RLEL…TFSG), 106–127 (SLQV…TLYG), 130–151 (SLTR…AFYG), 154–175 (LLRL…TFVS), and 186–207 (FIKY…MVSS). The LRRCT domain maps to 219–281 (NPWTCDCHLK…VPSGSFLCTK (63 aa)). A glycan (N-linked (GlcNAc...) asparagine) is linked at asparagine 439. Ig-like C2-type domains follow at residues 461 to 567 (PKAE…YRIT) and 571 to 661 (PYVE…FQVS). Disulfide bonds link cysteine 497–cysteine 551 and cysteine 595–cysteine 645. N-linked (GlcNAc...) asparagine glycosylation is present at asparagine 627. A compositionally biased stretch (basic and acidic residues) spans 670 to 685 (IEHDRDIDGSGLEEPK). Disordered regions lie at residues 670-725 (IEHD…RDLT) and 963-1008 (VSSN…GRER). A compositionally biased stretch (basic residues) spans 715–725 (IHKKNKHRDLT). Residues 972 to 984 (TTKDPGFSKRPSD) are compositionally biased toward basic and acidic residues. Over residues 985-1003 (SHTTAPSLFQTPRNNSTGN) the composition is skewed to polar residues. A glycan (N-linked (GlcNAc...) asparagine) is linked at asparagine 1044. Disordered stretches follow at residues 1228 to 1251 (TATK…PSTT), 1333 to 1364 (VRSK…GYST), and 1428 to 1457 (SQES…PSPP). Basic and acidic residues predominate over residues 1333 to 1342 (VRSKKAKDQT). Positions 1355-1364 (TPRQISGYST) are enriched in polar residues. Ig-like C2-type domains lie at 1619–1710 (PRII…VTLS), 1715–1807 (PARI…VKIQ), 1812–1901 (PPVI…RRVV), 1912–2005 (PRIE…VRLR), 2008–2106 (PAKI…VHLT), 2112–2200 (PRIR…YKLD), 2205–2302 (PPLI…LKVL), 2308–2398 (PTFR…ILLE), 2403–2493 (PVIL…VPVT), and 2499–2592 (PRII…TYIQ). 3 disulfides stabilise this stretch: cysteine 1641–cysteine 1694, cysteine 1738–cysteine 1791, and cysteine 1835–cysteine 1888. An LRR 11 repeat occupies 1658–1681 (SGREISRGIQKTRFHVLPNGTLSI). N-linked (GlcNAc...) asparagine glycans are attached at residues asparagine 1676, asparagine 1780, asparagine 1870, and asparagine 1933. 7 disulfide bridges follow: cysteine 1934-cysteine 1987, cysteine 2031-cysteine 2090, cysteine 2134-cysteine 2184, cysteine 2232-cysteine 2284, cysteine 2330-cysteine 2382, cysteine 2425-cysteine 2477, and cysteine 2521-cysteine 2576. Residue asparagine 2072 is glycosylated (N-linked (GlcNAc...) asparagine). N-linked (GlcNAc...) asparagine glycosylation is present at asparagine 2364. Tyrosine 2574 bears the Phosphotyrosine mark.

As to expression, in the embryo, expressed in the nasal mesenchyme.

Its subcellular location is the secreted. In terms of biological role, involved in the control of early migration of neurons expressing gonadotropin-releasing hormone (GNRH neurons). May be involved in the maintenance of osteochondroprogenitor cells pool. This Mus musculus (Mouse) protein is Immunoglobulin superfamily member 10 (Igsf10).